Here is a 166-residue protein sequence, read N- to C-terminus: Phosphopantetheine adenylyltransferase (166 aa).

Residue T10 coordinates substrate. Residues 10 to 11 (TF) and H18 contribute to the ATP site. K42, L74, and R88 together coordinate substrate. ATP-binding positions include 89–91 (GLR), E99, and 124–130 (NSFISSS).

Belongs to the bacterial CoaD family. Homohexamer. Requires Mg(2+) as cofactor.

The protein localises to the cytoplasm. It carries out the reaction (R)-4'-phosphopantetheine + ATP + H(+) = 3'-dephospho-CoA + diphosphate. Its pathway is cofactor biosynthesis; coenzyme A biosynthesis; CoA from (R)-pantothenate: step 4/5. Its function is as follows. Reversibly transfers an adenylyl group from ATP to 4'-phosphopantetheine, yielding dephospho-CoA (dPCoA) and pyrophosphate. This Idiomarina loihiensis (strain ATCC BAA-735 / DSM 15497 / L2-TR) protein is Phosphopantetheine adenylyltransferase.